The following is a 443-amino-acid chain: Glutamyl-tRNA reductase (443 aa).

Substrate contacts are provided by residues 49–52 (TCNR), Ser-109, 114–116 (EPQ), and Gln-120. Cys-50 (nucleophile) is an active-site residue. 189 to 194 (GAGKMC) contacts NADP(+). The segment at 421–443 (PDSQQTGGDSVEKDADSKQDLTS) is disordered. Positions 430–443 (SVEKDADSKQDLTS) are enriched in basic and acidic residues.

It belongs to the glutamyl-tRNA reductase family. Homodimer.

It catalyses the reaction (S)-4-amino-5-oxopentanoate + tRNA(Glu) + NADP(+) = L-glutamyl-tRNA(Glu) + NADPH + H(+). Its pathway is porphyrin-containing compound metabolism; protoporphyrin-IX biosynthesis; 5-aminolevulinate from L-glutamyl-tRNA(Glu): step 1/2. Functionally, catalyzes the NADPH-dependent reduction of glutamyl-tRNA(Glu) to glutamate 1-semialdehyde (GSA). The protein is Glutamyl-tRNA reductase of Syntrophotalea carbinolica (strain DSM 2380 / NBRC 103641 / GraBd1) (Pelobacter carbinolicus).